We begin with the raw amino-acid sequence, 1663 residues long: Complement C3 (1663 aa).

Positions 1 to 22 (MGPTSGPSLLLLLLTHLPLALG) are cleaved as a signal peptide. Serine 38 and serine 70 each carry phosphoserine; by FAM20C. N-linked (GlcNAc...) asparagine glycosylation is present at asparagine 85. Phosphoserine; by FAM20C occurs at positions 297 and 303. Disulfide bonds link cysteine 559/cysteine 816, cysteine 627/cysteine 662, cysteine 693/cysteine 720, cysteine 694/cysteine 727, cysteine 707/cysteine 728, cysteine 873/cysteine 1513, cysteine 1101/cysteine 1158, cysteine 1358/cysteine 1489, cysteine 1389/cysteine 1458, cysteine 1506/cysteine 1511, cysteine 1518/cysteine 1590, cysteine 1537/cysteine 1661, and cysteine 1637/cysteine 1646. Serine 672 bears the Phosphoserine; by FAM20C mark. Positions 693-728 (CCEDGMRENPMRFSCQRRTRFISLGEACKKVFLDCC) constitute an Anaphylatoxin-like domain. An N-linked (GlcNAc...) asparagine glycan is attached at asparagine 939. The segment at 954-973 (REGVQKEDIPPADLSDQVPD) is disordered. Serine 968 carries the post-translational modification Phosphoserine; by FAM20C. Residues 1010 to 1013 (CGEQ) constitute a cross-link (isoglutamyl cysteine thioester (Cys-Gln)). The residue at position 1321 (serine 1321) is a Phosphoserine; by FAM20C. In terms of domain architecture, NTR spans 1518-1661 (CFIQKSDDKV…FTESMVVFGC (144 aa)). A Phosphoserine; by FAM20C modification is found at serine 1573. A glycan (N-linked (GlcNAc...) asparagine) is linked at asparagine 1617. The interaction with CFP/properdin stretch occupies residues 1634–1659 (EDECQDEENQKQCQDLGAFTESMVVF).

In absence of complement activation, the C3 precursor is first processed by the removal of 4 Arg residues, forming two chains, beta and alpha, linked by a disulfide bond. In terms of assembly, complement C3b is composed of complement C3b and complement C3 beta chains that are associated via disulfide bonds. Non-enzymatic component of the C5 convertase, also named C4bC2bC3b, composed of the serine protease complement C2b (C2), complement C3b, as well as complement C4b (C4). Non-enzymatic component of the C5 convertase of the alternative complement pathways composed of the serine protease complement CFB and complement C3b. Interacts with CFP; interaction takes place together with CFB in the alternative complement system and allows the complex to become active. Interacts with CR1 (via Sushi 8 and Sushi 9 domains). Interacts with CFH. As to quaternary structure, interacts with CFH. Interacts with CR2. During pregnancy, C3dg exists as a complex (probably a 2:2:2 heterohexamer) with AGT and the proform of PRG2. Interacts with CR2 (via the N-terminal Sushi domains 1 and 2). In terms of assembly, (Microbial infection) C3b interacts with herpes simplex virus 1 (HHV-1) and herpes simplex virus 2 (HHV-2) envelope glycoprotein C; this interaction inhibits the activation of the complement system. As to quaternary structure, (Microbial infection) Interacts with Staphylococcus aureus immunoglobulin-binding protein Sbi; this interaction prevents the association between C3dg and CR2. (Microbial infection) Interacts with Staphylococcus aureus protein Fib. In terms of processing, C3 precursor is first processed by the removal of 4 Arg residues, forming two chains, beta and alpha, linked by a disulfide bond. During activation of the complement systems, the alpha chain is cleaved into C3a and C3b by the C3 convertase: C3b stays linked to the beta chain, while C3a is released in the plasma. The alpha chain is cleaved by the serine protease complement C2b component of the C3 convertase to generate C3a and C3b following activation by the classical, lectin and GZMK complement systems. The alpha chain is cleaved by CFB component of the C3 convertase to generate C3a and C3b following activation by the alternative complement system. C3a is further processed by carboxypeptidases to release the C-terminal arginine residue generating the acylation stimulating protein (ASP). Levels of ASP are increased in adipocytes in the postprandial period and by insulin and dietary chylomicrons. Post-translationally, complement C3b is rapidly split in two positions by factor I (CFI) and a cofactor (CFH) to form iC3b (inactivated C3b) and C3f which is released. CFI and CFH catalyze proteolytic degradation of already-deposited complement C3b. Then iC3b is slowly cleaved (possibly by CFI) to form C3c (beta chain + alpha' chain fragment 1 + alpha' chain fragment 2), C3dg and C3f. Other proteases produce other fragments such as C3d or C3g. In terms of processing, upon activation, the internal thioester bond reacts with carbohydrate antigens on the target surface to form amide or ester bonds, leading to covalent association with the surface of pathogens. Complement C3b interacts with complement C4b via a thioester linkage. Post-translationally, phosphorylated by FAM20C in the extracellular medium. In terms of processing, (Microbial infection) C3 is cleaved by Staphylococcus aureus aureolysin; this cleavage renders C3a and C3b inactive. C3b is rapidly degraded by host factors CFH and CFI preventing its deposition on the bacterial surface while C3a is further inactivated by aureolysin. (Microbial infection) Complement C3 beta chain is cleaved and inactivated by S.pyogenes SpeB. Post-translationally, (Microbial infection) Cleaved by N.meningitidis NalP between Leu-744 and Gly-745, generating a slightly shorter C3 alpha form and a slightly longer C3 beta form. The C3b-like fragment is degraded in the presence of the complement regulators CFH and CFI, preventing its deposition on the bacterial surface. As to expression, plasma. Produced in adipocytes and released into the plasma during both the fasting and postprandial periods.

Its subcellular location is the secreted. The protein resides in the cell surface. Complement activation is inhibited by VSIG4. In terms of biological role, precursor of non-enzymatic components of the classical, alternative, lectin and GZMK complement pathways, which consist in a cascade of proteins that leads to phagocytosis and breakdown of pathogens and signaling that strengthens the adaptive immune system. Non-enzymatic component of C5 convertase. Generated following cleavage by C3 convertase, it covalently attaches to the surface of pathogens, where it acts as an opsonin that marks the surface of antigens for removal. Complement C3b binds covalently via its reactive thioester, to cell surface carbohydrates or immune aggregates. Together with complement C4b, it then recruits the serine protease complement C2b to form the C5 convertase, which cleaves and activate C5, the next component of the complement pathways. In the alternative complement pathway, recruits the serine protease CFB to form the C5 convertase that cleaves and activates C5. Functionally, mediator of local inflammatory process released following cleavage by C3 convertase. Acts by binding to its receptor, C3AR1, activating G protein-coupled receptor signaling, promoting the phosphorylation, ARRB2-mediated internalization and endocytosis of C3AR1. C3a anaphylatoxin stimulates the activation of immune cells such as mast cells and basophilic leukocytes to release inflammation agents, such as cytokines, chemokines and histamine, which promote inflammation development. Also acts as potent chemoattractant for the migration of macrophages and neutrophils to the inflamed tissues, resulting in neutralization of the inflammatory triggers by multiple ways, such as phagocytosis and generation of reactive oxidants. Its function is as follows. Adipogenic hormone that stimulates triglyceride synthesis and glucose transport in adipocytes, regulating fat storage and playing a role in postprandial triglyceride clearance. Appears to stimulate triglyceride synthesis via activation of the PLC, MAPK and AKT signaling pathways. Acts by binding to its receptor, C5AR2, activating G protein-coupled receptor signaling, promoting the phosphorylation, ARRB2-mediated internalization and endocytosis of C5AR2. In terms of biological role, acts as a chemoattractant for neutrophils in chronic inflammation. This Homo sapiens (Human) protein is Complement C3.